An 809-amino-acid chain; its full sequence is Lon protease (809 aa).

The Lon N-terminal domain maps to 8–203; the sequence is LPVVALRNMA…RLCLILADEI (196 aa). Residue 354–361 participates in ATP binding; the sequence is GPPGTGKT. Residues 629–809 form the Lon proteolytic domain; it reads KDEVGIVCGL…MDEVLKHALV (181 aa). Residues Ser716 and Lys759 contribute to the active site.

This sequence belongs to the peptidase S16 family. In terms of assembly, homohexamer. Organized in a ring with a central cavity.

It is found in the cytoplasm. It catalyses the reaction Hydrolysis of proteins in presence of ATP.. Functionally, ATP-dependent serine protease that mediates the selective degradation of mutant and abnormal proteins as well as certain short-lived regulatory proteins. Required for cellular homeostasis and for survival from DNA damage and developmental changes induced by stress. Degrades polypeptides processively to yield small peptide fragments that are 5 to 10 amino acids long. Binds to DNA in a double-stranded, site-specific manner. The polypeptide is Lon protease (Lachnoclostridium phytofermentans (strain ATCC 700394 / DSM 18823 / ISDg) (Clostridium phytofermentans)).